A 407-amino-acid polypeptide reads, in one-letter code: Cation efflux system protein CusB (407 aa).

Residues 1–26 form the signal peptide; sequence MKKIALIIGSMIAGGIISAAGFTWFA.

Belongs to the membrane fusion protein (MFP) (TC 8.A.1) family. As to quaternary structure, the cus efflux system is composed of CusA, CusB, CusC and CusF.

In terms of biological role, part of a cation efflux system that mediates resistance to copper and silver. In Escherichia coli O6:H1 (strain CFT073 / ATCC 700928 / UPEC), this protein is Cation efflux system protein CusB (cusB).